We begin with the raw amino-acid sequence, 287 residues long: tRNA pseudouridine synthase B (287 aa).

Asp-38 (nucleophile) is an active-site residue.

This sequence belongs to the pseudouridine synthase TruB family. Type 1 subfamily.

It catalyses the reaction uridine(55) in tRNA = pseudouridine(55) in tRNA. In terms of biological role, responsible for synthesis of pseudouridine from uracil-55 in the psi GC loop of transfer RNAs. The sequence is that of tRNA pseudouridine synthase B from Fusobacterium nucleatum subsp. nucleatum (strain ATCC 25586 / DSM 15643 / BCRC 10681 / CIP 101130 / JCM 8532 / KCTC 2640 / LMG 13131 / VPI 4355).